We begin with the raw amino-acid sequence, 880 residues long: Pyruvate, phosphate dikinase (880 aa).

The tract at residues 1 to 348 (MNKLIYYFGN…LYILQTRTAK (348 aa)) is N-terminal. Position 97 (Arg97) interacts with ATP. A linker 1 region spans residues 349–405 (RTAIAAINIAVQMVEEKLISKEQALMRIDPESLNQLLHTRIDYSKKLTAIAEGLPAS). The interval 406-503 (PGAATGIVVF…VIKQGDIITI (98 aa)) is central. Residue Thr458 is modified to Phosphothreonine; by PDRP1. The active-site Tele-phosphohistidine intermediate is the His460. Positions 504-538 (DGGSGKIFLGEMPLIQPTFSEESTLILDWADEISS) are linker 2. The tract at residues 539-879 (LKVRANAETV…AAAQAKIKQG (341 aa)) is C-terminal. Substrate-binding residues include Arg566, Arg622, Glu750, Gly771, Thr772, Asn773, and Asp774. Glu750 contributes to the Mg(2+) binding site. Asp774 contacts Mg(2+). The Proton donor role is filled by Cys836.

It belongs to the PEP-utilizing enzyme family. In terms of assembly, homodimer. Requires Mg(2+) as cofactor. In terms of processing, phosphorylation of Thr-458 in the dark inactivates the enzyme. Dephosphorylation upon light stimulation reactivates the enzyme.

It catalyses the reaction pyruvate + phosphate + ATP = phosphoenolpyruvate + AMP + diphosphate + H(+). Activated by light-induced dephosphorylation. Inhibited by dark-induced phosphorylation. Both reactions are catalyzed by PDRP1. Catalyzes the reversible phosphorylation of pyruvate and phosphate. The chain is Pyruvate, phosphate dikinase (ppdK) from Rickettsia typhi (strain ATCC VR-144 / Wilmington).